Here is a 408-residue protein sequence, read N- to C-terminus: Aminopeptidase T (408 aa).

A divalent metal cation contacts are provided by glutamate 250, glutamate 316, glutamate 340, histidine 345, histidine 376, and aspartate 378.

It belongs to the peptidase M29 family. In terms of assembly, homodimer. It depends on Co(2+) as a cofactor. Zn(2+) is required as a cofactor. Requires Mg(2+) as cofactor.

In terms of biological role, metal-dependent exopeptidase. This is Aminopeptidase T from Thermus aquaticus.